Consider the following 276-residue polypeptide: Undecaprenyl-diphosphatase (276 aa).

8 consecutive transmembrane segments (helical) span residues 2-22 (LEIL…FLPI), 43-63 (FIDM…VVLY), 83-103 (WTLW…GLPL), 111-131 (LMNW…FIVI), 147-167 (TLPY…LIPG), 186-206 (YVAA…ASLL), 224-244 (LILA…IRFL), and 255-275 (AFGW…ALLA).

It belongs to the UppP family.

It localises to the cell membrane. It carries out the reaction di-trans,octa-cis-undecaprenyl diphosphate + H2O = di-trans,octa-cis-undecaprenyl phosphate + phosphate + H(+). In terms of biological role, catalyzes the dephosphorylation of undecaprenyl diphosphate (UPP). Confers resistance to bacitracin. This is Undecaprenyl-diphosphatase from Limosilactobacillus fermentum (strain NBRC 3956 / LMG 18251) (Lactobacillus fermentum).